The primary structure comprises 258 residues: Ribosomal RNA large subunit methyltransferase E (258 aa).

Positions 58, 60, 78, 96, and 120 each coordinate S-adenosyl-L-methionine. Catalysis depends on Lys160, which acts as the Proton acceptor.

Belongs to the class I-like SAM-binding methyltransferase superfamily. RNA methyltransferase RlmE family.

It is found in the cytoplasm. It catalyses the reaction uridine(2552) in 23S rRNA + S-adenosyl-L-methionine = 2'-O-methyluridine(2552) in 23S rRNA + S-adenosyl-L-homocysteine + H(+). In terms of biological role, specifically methylates the uridine in position 2552 of 23S rRNA at the 2'-O position of the ribose in the fully assembled 50S ribosomal subunit. This is Ribosomal RNA large subunit methyltransferase E from Methanococcus maripaludis (strain DSM 14266 / JCM 13030 / NBRC 101832 / S2 / LL).